We begin with the raw amino-acid sequence, 217 residues long: Probable GTP-binding protein EngB (217 aa).

The region spanning 40–217 (DVPEIAFAGR…RAAVLQDAMG (178 aa)) is the EngB-type G domain. GTP is bound by residues 48 to 55 (GRSNVGKS), 75 to 79 (GRTQE), 95 to 98 (DMPG), 162 to 165 (TKAD), and 196 to 198 (TSS). Mg(2+)-binding residues include Ser55 and Thr77.

Belongs to the TRAFAC class TrmE-Era-EngA-EngB-Septin-like GTPase superfamily. EngB GTPase family. Mg(2+) is required as a cofactor.

Necessary for normal cell division and for the maintenance of normal septation. This Novosphingobium aromaticivorans (strain ATCC 700278 / DSM 12444 / CCUG 56034 / CIP 105152 / NBRC 16084 / F199) protein is Probable GTP-binding protein EngB.